The primary structure comprises 132 residues: Ig kappa chain V-III region MOPC 321 (132 aa).

A signal peptide spans 1–20; sequence METDTLLLWVLLLWVPGSTG. Residues 21–43 are framework-1; sequence DIVLTQSPASLAVSLGQRATISC. A disulfide bridge links cysteine 43 with cysteine 112. A complementarity-determining-1 region spans residues 44–58; sequence RASKSVNTYGNSFMZ. The interval 59-73 is framework-2; the sequence is WYZZKPGZPPKLLIY. Residues 74-80 are complementarity-determining-2; the sequence is RASNLZS. Residues 81–112 form a framework-3 region; that stretch reads GIPARFSGSGSRTBFTLTIBPVZABDVATYFC. The tract at residues 113 to 121 is complementarity-determining-3; it reads ZZSBZBPWT. The segment at 122–131 is framework-4; the sequence is FGSGTKLEIK.

The protein is Ig kappa chain V-III region MOPC 321 of Mus musculus (Mouse).